Reading from the N-terminus, the 187-residue chain is Pyridoxal 5'-phosphate synthase subunit PdxT (187 aa).

47–49 (GES) is an L-glutamine binding site. Cys-76 serves as the catalytic Nucleophile. L-glutamine contacts are provided by residues Arg-102 and 128–129 (IR). Residues His-165 and Glu-167 each act as charge relay system in the active site.

It belongs to the glutaminase PdxT/SNO family. As to quaternary structure, in the presence of PdxS, forms a dodecamer of heterodimers. Only shows activity in the heterodimer.

It carries out the reaction aldehydo-D-ribose 5-phosphate + D-glyceraldehyde 3-phosphate + L-glutamine = pyridoxal 5'-phosphate + L-glutamate + phosphate + 3 H2O + H(+). The catalysed reaction is L-glutamine + H2O = L-glutamate + NH4(+). The protein operates within cofactor biosynthesis; pyridoxal 5'-phosphate biosynthesis. Its function is as follows. Catalyzes the hydrolysis of glutamine to glutamate and ammonia as part of the biosynthesis of pyridoxal 5'-phosphate. The resulting ammonia molecule is channeled to the active site of PdxS. The chain is Pyridoxal 5'-phosphate synthase subunit PdxT from Methanococcus vannielii (strain ATCC 35089 / DSM 1224 / JCM 13029 / OCM 148 / SB).